A 192-amino-acid chain; its full sequence is ATP synthase subunit b 2 (192 aa).

The chain crosses the membrane as a helical span at residues 39–59; the sequence is SGFLAQLIWLALAFGLLYYLM.

The protein belongs to the ATPase B chain family. As to quaternary structure, F-type ATPases have 2 components, F(1) - the catalytic core - and F(0) - the membrane proton channel. F(1) has five subunits: alpha(3), beta(3), gamma(1), delta(1), epsilon(1). F(0) has three main subunits: a(1), b(2) and c(10-14). The alpha and beta chains form an alternating ring which encloses part of the gamma chain. F(1) is attached to F(0) by a central stalk formed by the gamma and epsilon chains, while a peripheral stalk is formed by the delta and b chains.

It localises to the cell inner membrane. In terms of biological role, f(1)F(0) ATP synthase produces ATP from ADP in the presence of a proton or sodium gradient. F-type ATPases consist of two structural domains, F(1) containing the extramembraneous catalytic core and F(0) containing the membrane proton channel, linked together by a central stalk and a peripheral stalk. During catalysis, ATP synthesis in the catalytic domain of F(1) is coupled via a rotary mechanism of the central stalk subunits to proton translocation. Component of the F(0) channel, it forms part of the peripheral stalk, linking F(1) to F(0). The b'-subunit is a diverged and duplicated form of b found in plants and photosynthetic bacteria. This chain is ATP synthase subunit b 2 (atpF2), found in Methylobacterium radiotolerans (strain ATCC 27329 / DSM 1819 / JCM 2831 / NBRC 15690 / NCIMB 10815 / 0-1).